The following is a 247-amino-acid chain: 5'-nucleotidase SurE (247 aa).

The a divalent metal cation site is built by Asp-8, Asp-9, Ser-39, and Asn-95.

It belongs to the SurE nucleotidase family. It depends on a divalent metal cation as a cofactor.

The protein resides in the cytoplasm. It catalyses the reaction a ribonucleoside 5'-phosphate + H2O = a ribonucleoside + phosphate. In terms of biological role, nucleotidase that shows phosphatase activity on nucleoside 5'-monophosphates. This chain is 5'-nucleotidase SurE, found in Thermotoga petrophila (strain ATCC BAA-488 / DSM 13995 / JCM 10881 / RKU-1).